Here is a 159-residue protein sequence, read N- to C-terminus: Transcription elongation factor GreA (159 aa).

Belongs to the GreA/GreB family.

Functionally, necessary for efficient RNA polymerase transcription elongation past template-encoded arresting sites. The arresting sites in DNA have the property of trapping a certain fraction of elongating RNA polymerases that pass through, resulting in locked ternary complexes. Cleavage of the nascent transcript by cleavage factors such as GreA or GreB allows the resumption of elongation from the new 3'terminus. GreA releases sequences of 2 to 3 nucleotides. This is Transcription elongation factor GreA from Orientia tsutsugamushi (strain Ikeda) (Rickettsia tsutsugamushi).